A 246-amino-acid polypeptide reads, in one-letter code: Probable septum site-determining protein MinC (246 aa).

This sequence belongs to the MinC family. As to quaternary structure, interacts with MinD and FtsZ.

In terms of biological role, cell division inhibitor that blocks the formation of polar Z ring septums. Rapidly oscillates between the poles of the cell to destabilize FtsZ filaments that have formed before they mature into polar Z rings. Prevents FtsZ polymerization. In Pseudomonas savastanoi pv. phaseolicola (strain 1448A / Race 6) (Pseudomonas syringae pv. phaseolicola (strain 1448A / Race 6)), this protein is Probable septum site-determining protein MinC.